Reading from the N-terminus, the 253-residue chain is Dihydroanticapsin 7-dehydrogenase (253 aa).

Residue 9-31 (LITGGASGIGYAAVQAFLNQQAN) participates in NAD(+) binding. Ser-139 contacts substrate. Residue Tyr-152 is the Proton acceptor of the active site.

It belongs to the short-chain dehydrogenases/reductases (SDR) family.

It catalyses the reaction L-dihydroanticapsin + NAD(+) = L-anticapsin + NADH + H(+). It functions in the pathway antibiotic biosynthesis; bacilysin biosynthesis. In terms of biological role, part of the bacABCDEFG operon responsible for the biosynthesis of bacilysin, an irreversible inactivator of the glutaminase domain of glucosamine synthetase. Catalyzes the dehydrogenation of the C7-hydroxyl group in the 4S-tetrahydrotyrosine (4S-H4Tyr) to yield anticapsin (epoxycyclohexanonyl-Ala). The polypeptide is Dihydroanticapsin 7-dehydrogenase (Bacillus subtilis).